Consider the following 798-residue polypeptide: PR domain zinc finger protein 4 (798 aa).

The SET domain occupies 408–525 (KQLVLRQSIV…PENELLFYYS (118 aa)). C2H2-type zinc fingers lie at residues 586–608 (WKCSMCPQAFISPSKLHVHFMGH), 614–636 (HKCDFCSKAFSDPSNLRTHLKIH), 642–664 (YRCTLCDKSFTQKAHLESHMVIH), 670–692 (LKCDYCDKLFMRRQDLKQHVLIH), and 698–720 (IKCPKCDKLFLRTNHLKKHLNSH). A C2H2-type 6; degenerate zinc finger spans residues 726–747 (YVCEKCTKAYLTKYHLTRHLKA). The segment at 750 to 798 (EPASSSSAQDDEDEDGDSGEDGLPGSMTTEGCRMSSAVYSADESLSAHK) is disordered. Acidic residues predominate over residues 758-769 (QDDEDEDGDSGE).

This sequence belongs to the class V-like SAM-binding methyltransferase superfamily.

It is found in the nucleus. Its function is as follows. May function as a transcription factor involved in cell differentiation. The sequence is that of PR domain zinc finger protein 4 (Prdm4) from Rattus norvegicus (Rat).